Consider the following 865-residue polypeptide: Envelope glycoprotein B (865 aa).

The N-terminal stretch at 1-21 is a signal peptide; that stretch reads MHYFRRNCIFFLIVILYGTNS. Residues 22–731 are Virion surface-facing; sequence SPSTQNVTSR…SGVSAFMSNP (710 aa). N-linked (GlcNAc...) asparagine; by host glycosylation occurs at Asn-27. Disulfide bonds link Cys-49–Cys-530, Cys-66–Cys-486, Cys-140–Cys-204, Cys-298–Cys-346, and Cys-553–Cys-590. An involved in fusion and/or binding to host membrane region spans residues 106–112; that stretch reads TWTGTTY. The N-linked (GlcNAc...) asparagine; by host glycan is linked to Asn-184. The involved in fusion and/or binding to host membrane stretch occupies residues 191–198; that stretch reads GSPWIYRT. Residues Asn-332, Asn-364, Asn-406, and Asn-425 are each glycosylated (N-linked (GlcNAc...) asparagine; by host). N-linked (GlcNAc...) asparagine; by host glycosylation occurs at Asn-631. Hydrophobic membrane proximal region regions lie at residues 676–729 and 683–729; these read INKV…AFMS and DTNY…AFMS. A helical membrane pass occupies residues 732 to 752; that stretch reads FGALAIGLIIIAGLVAAFLAY. At 753–865 the chain is on the intravirion side; the sequence is RYVNKLKSNP…TYSDSEDDAV (113 aa). Positions 809 to 812 match the Golgi targeting motif; it reads YMAL. The tract at residues 843–865 is disordered; it reads IKNSNPKYDKLPTTYSDSEDDAV. The short motif at 850–853 is the Internalization motif element; the sequence is YDKL.

Belongs to the herpesviridae glycoprotein B family. Homotrimer; disulfide-linked. Binds to heparan sulfate proteoglycans. Interacts with gH/gL heterodimer. A proteolytic cleavage by host furin generates two subunits that remain linked by disulfide bonds.

It is found in the virion membrane. The protein localises to the host cell membrane. It localises to the host endosome membrane. Its subcellular location is the host Golgi apparatus membrane. In terms of biological role, envelope glycoprotein that forms spikes at the surface of virion envelope. Essential for the initial attachment to heparan sulfate moieties of the host cell surface proteoglycans. Involved in fusion of viral and cellular membranes leading to virus entry into the host cell. Following initial binding to its host receptors, membrane fusion is mediated by the fusion machinery composed at least of gB and the heterodimer gH/gL. May be involved in the fusion between the virion envelope and the outer nuclear membrane during virion egress. This Gallid herpesvirus 2 (strain Chicken/Md5/ATCC VR-987) (GaHV-2) protein is Envelope glycoprotein B.